The primary structure comprises 707 residues: Translation initiation factor eIF2B subunit epsilon (707 aa).

2 disordered regions span residues 489 to 526 (HDDI…SVKF) and 686 to 707 (AEEE…DESD). Residues 516–693 (DNPIEPDSVK…KSAEEESDDS (178 aa)) enclose the W2 domain. The segment covering 688 to 707 (EESDDSDDSDDDDDDSDESD) has biased composition (acidic residues).

The protein belongs to the eIF-2B gamma/epsilon subunits family. In terms of assembly, component of the translation initiation factor 2B (eIF2B) complex which is a heterodecamer of two sets of five different subunits: alpha, beta, gamma, delta and epsilon. Subunits alpha, beta and delta comprise a regulatory subcomplex and subunits epsilon and gamma comprise a catalytic subcomplex. Within the complex, the hexameric regulatory complex resides at the center, with the two heterodimeric catalytic subcomplexes bound on opposite sides.

The protein resides in the cytoplasm. It localises to the cytosol. Acts as a component of the translation initiation factor 2B (eIF2B) complex, which catalyzes the exchange of GDP for GTP on eukaryotic initiation factor 2 (eIF2) gamma subunit. Its guanine nucleotide exchange factor activity is repressed when bound to eIF2 complex phosphorylated on the alpha subunit, thereby limiting the amount of methionyl-initiator methionine tRNA available to the ribosome and consequently global translation is repressed. The protein is Translation initiation factor eIF2B subunit epsilon (eif2b5) of Dictyostelium discoideum (Social amoeba).